We begin with the raw amino-acid sequence, 320 residues long: Reticulocalbin-2 (320 aa).

The N-terminal stretch at 1 to 25 (MRLGPRPAVLGLLLLLLLYAAVAGA) is a signal peptide. EF-hand domains follow at residues 64-99 (EQQR…SFKH) and 100-135 (YAMQ…RVID). Ca(2+)-binding residues include aspartate 77, aspartate 79, aspartate 81, glutamate 88, aspartate 113, asparagine 115, aspartate 117, threonine 119, and glutamate 124. Threonine 140 is subject to Phosphothreonine. EF-hand domains are found at residues 150 to 185 (FRQL…HPEE), 189 to 224 (MTEF…DPTA), 230 to 265 (WILV…NNQG), and 266 to 301 (IAQE…FLTS). Residues aspartate 167, glutamate 176, aspartate 202, asparagine 204, aspartate 206, glutamate 213, aspartate 243, aspartate 245, aspartate 247, arginine 249, glutamate 254, aspartate 279, asparagine 281, aspartate 283, lysine 285, and glutamate 290 each contribute to the Ca(2+) site. A Prevents secretion from ER motif is present at residues 317–320 (HDEL).

The protein belongs to the CREC family. Binds the snake venom phospholipase complex taipoxin. In terms of tissue distribution, ubiquitous.

It is found in the endoplasmic reticulum lumen. Functionally, not known. Binds calcium. In Rattus norvegicus (Rat), this protein is Reticulocalbin-2 (Rcn2).